The primary structure comprises 305 residues: MTARALWLLCLIVGWSPEAPVAERKAPPPHRKPDSRETPGPRAQPLPEFSRRPRAAYAGPRAWPDPRRRKTAPPADNRAGFRDAVHAPAALPGPRLAQAENRASPPEDSPRRALSRAVRPPGARAASPAHPNRPRAAAQPSGTPQALSPEDREPETQSCARACSADADEWEAYCASEFAVNGIVHDVDVLGAGMRLVTLLVDPDGLYKMSRLYITPDGFFFRVHILALDSSSCHKPCPEFKPGSRYIVMGHIYHKRRQLPSALLQVLRGRLRPGDGLIRGSSSYVKRFNRKREWQVRGATHTQCI.

Positions 1–22 are cleaved as a signal peptide; it reads MTARALWLLCLIVGWSPEAPVA. The interval 18–160 is disordered; that stretch reads EAPVAERKAP…DREPETQSCA (143 aa). Over residues 21-39 the composition is skewed to basic and acidic residues; the sequence is VAERKAPPPHRKPDSRETP. 3 disulfide bridges follow: Cys-159-Cys-233, Cys-163-Cys-237, and Cys-174-Cys-304. Residues 159–304 form the NTR domain; it reads CARACSADAD…QVRGATHTQC (146 aa).

Belongs to the UPF0450 family.

The protein is UPF0450 protein C17orf58 homolog of Mus musculus (Mouse).